A 177-amino-acid polypeptide reads, in one-letter code: MSKNDHLSDDELSLFREAVQGSKKLRQDTIIHQPSKNFSEQQKQRKSLKEGKNEEFFFSDEFVPLLNEDGPVRYARDGVSKYEVKRLRRGVYVPDVFLDMHGMKQDEAKRELGSMIAYCLKENISCASVMHGIGKHILKQKVPLWLAQHPDVMAFHQAPLEFGGAGAILVLLSIPDR.

The segment at 22–45 (SKKLRQDTIIHQPSKNFSEQQKQR) is disordered. Residues 30–41 (IIHQPSKNFSEQ) are compositionally biased toward polar residues. Residues 98–173 (LDMHGMKQDE…GAGAILVLLS (76 aa)) form the Smr domain.

The protein belongs to the SmrB family. In terms of assembly, associates with collided ribosomes, but not with correctly translating polysomes.

Its function is as follows. Acts as a ribosome collision sensor. Detects stalled/collided disomes (pairs of ribosomes where the leading ribosome is stalled and a second ribosome has collided with it) and endonucleolytically cleaves mRNA at the 5' boundary of the stalled ribosome. Stalled/collided disomes form a new interface (primarily via the 30S subunits) that binds SmrB. Cleaved mRNA becomes available for tmRNA ligation, leading to ribosomal subunit dissociation and rescue of stalled ribosomes. The chain is Ribosome rescue factor SmrB from Aliivibrio salmonicida (strain LFI1238) (Vibrio salmonicida (strain LFI1238)).